Here is a 551-residue protein sequence, read N- to C-terminus: Peptidyl-prolyl cis-trans isomerase-like 4 (551 aa).

Positions 1–185 (MSVLLETSLG…RDIRIRHVVV (185 aa)) constitute a PPIase cyclophilin-type domain. Residues 54–88 (GDPSNTGKGGASIWSQLPSTSQDSSTSTYFTPESS) are disordered. A compositionally biased stretch (polar residues) spans 66 to 88 (IWSQLPSTSQDSSTSTYFTPESS). Residues 262-340 (NILFVCKLNP…RRIWVDFSQS (79 aa)) enclose the RRM domain. The tract at residues 352-551 (RNAGSDAPRA…RQRSRDGSRR (200 aa)) is disordered. Basic and acidic residues-rich tracts occupy residues 384–397 (KRGD…RDQP) and 408–454 (SRQD…SHRD). Positions 455-464 (HERHHLSRHV) are enriched in basic residues. Basic and acidic residues predominate over residues 465 to 551 (RPSDEGESKC…RQRSRDGSRR (87 aa)).

The protein belongs to the cyclophilin-type PPIase family. PPIL4 subfamily.

It localises to the nucleus. It catalyses the reaction [protein]-peptidylproline (omega=180) = [protein]-peptidylproline (omega=0). In terms of biological role, PPIases accelerate the folding of proteins. It catalyzes the cis-trans isomerization of proline imidic peptide bonds in oligopeptides. The protein is Peptidyl-prolyl cis-trans isomerase-like 4 (CYP6) of Mycosarcoma maydis (Corn smut fungus).